The primary structure comprises 126 residues: Acidic phospholipase A2 2 (126 aa).

The propeptide occupies 1–7 (SNRPMPL). Disulfide bonds link cysteine 18/cysteine 78, cysteine 33/cysteine 125, cysteine 35/cysteine 51, cysteine 50/cysteine 106, cysteine 57/cysteine 99, cysteine 67/cysteine 92, and cysteine 85/cysteine 97. Ca(2+) is bound by residues tyrosine 34, glycine 36, and glycine 38. Residue histidine 54 is part of the active site. Residue aspartate 55 coordinates Ca(2+). Residue aspartate 100 is part of the active site.

This sequence belongs to the phospholipase A2 family. Group I subfamily. D49 sub-subfamily. As to quaternary structure, heterodimer formed between two homologous isoforms: isoform 1 and isoform 2. Requires Ca(2+) as cofactor. Expressed by the venom gland.

The protein resides in the secreted. The catalysed reaction is a 1,2-diacyl-sn-glycero-3-phosphocholine + H2O = a 1-acyl-sn-glycero-3-phosphocholine + a fatty acid + H(+). PLA2 catalyzes the calcium-dependent hydrolysis of the 2-acyl groups in 3-sn-phosphoglycerides. This Naja sagittifera (Andaman cobra) protein is Acidic phospholipase A2 2.